The following is a 142-amino-acid chain: 3-hydroxyacyl-[acyl-carrier-protein] dehydratase FabZ (142 aa).

The active site involves H47.

This sequence belongs to the thioester dehydratase family. FabZ subfamily.

Its subcellular location is the cytoplasm. The catalysed reaction is a (3R)-hydroxyacyl-[ACP] = a (2E)-enoyl-[ACP] + H2O. Functionally, involved in unsaturated fatty acids biosynthesis. Catalyzes the dehydration of short chain beta-hydroxyacyl-ACPs and long chain saturated and unsaturated beta-hydroxyacyl-ACPs. The protein is 3-hydroxyacyl-[acyl-carrier-protein] dehydratase FabZ of Thermoanaerobacter sp. (strain X514).